The primary structure comprises 465 residues: Pre-mRNA-splicing factor URN1 (465 aa).

Residues 1–32 form the WW domain; sequence MRGEWQEFKTPAGKKYYYNKNTKQSRWEKPNL. 3 disordered regions span residues 28 to 49, 144 to 198, and 266 to 288; these read EKPN…QTER, ERKD…VNQD, and ERSG…DSEV. S150 is modified (phosphoserine). Residues 160 to 175 show a composition bias toward polar residues; that stretch reads LQESHTGLVSGYGSSS. Acidic residues predominate over residues 176 to 192; sequence GEEDEEEDEEEDEENEE. An FF domain is found at 212–266; that stretch reads DIDERNIFFELFDRYKLDKFSTWSLQSKKIENDPDFYKIRDDTVRESLFEEWCGE. Residues 274–288 show a composition bias toward acidic residues; sequence EESDSEDNSEDDSEV.

Component of the precatalytic spliceosomal complex B. Interacts with PRP19.

The protein resides in the nucleus. In terms of biological role, component of the spliceosome involved in mRNA processing. This is Pre-mRNA-splicing factor URN1 (URN1) from Saccharomyces cerevisiae (strain ATCC 204508 / S288c) (Baker's yeast).